A 551-amino-acid polypeptide reads, in one-letter code: NAD(P)H-quinone oxidoreductase chain 4 (551 aa).

Transmembrane regions (helical) follow at residues 25-45, 56-76, 111-131, 133-153, 157-177, 189-209, 233-253, 264-284, 298-318, 335-355, 356-376, 397-417, 438-458, and 485-505; these read FPWL…VPFI, WFAL…YLNG, LILL…PVTF, PKLF…VFAV, LLFF…LAIW, FILY…AMGF, LLCY…VPLH, TAPV…YALM, FAPL…LTSF, MGFV…GAML, QMIS…ATYD, FALW…SGFV, IVID…LLSM, and VYII…PRLM.

Belongs to the complex I subunit 4 family.

Its subcellular location is the cellular thylakoid membrane. The enzyme catalyses a plastoquinone + NADH + (n+1) H(+)(in) = a plastoquinol + NAD(+) + n H(+)(out). It catalyses the reaction a plastoquinone + NADPH + (n+1) H(+)(in) = a plastoquinol + NADP(+) + n H(+)(out). Its function is as follows. NDH-1 shuttles electrons from NAD(P)H, via FMN and iron-sulfur (Fe-S) centers, to quinones in the respiratory chain. The immediate electron acceptor for the enzyme in this species is believed to be plastoquinone. Couples the redox reaction to proton translocation (for every two electrons transferred, four hydrogen ions are translocated across the cytoplasmic membrane), and thus conserves the redox energy in a proton gradient. This is NAD(P)H-quinone oxidoreductase chain 4 from Synechococcus sp. (strain WH7803).